Reading from the N-terminus, the 314-residue chain is MIEIEKPKIETVELSEDAKYGKFVVEPLERGYGTTLGNSLRRILLSSLPGAAVTSVQIDGVLHEFSTIDGVVEDVTAIILNIKKLALKIYSDEEKTLEIDVQGEGVVTAADITHDSDVEILNPDLHIATLAEGGRLRMRMTAKRGRGYVPAEANKREDQPIGVIPIDSIYTPVSRVSYQVENTRVGQVTDYDKLTIDVWTDGSIGPKEAISLGAKILTEHLNIFVGLTDEAQNAEIMVEKEDDQKEKVLEMTIEELDLSVRSYNCLKRAGINTVQELTQKTEEDMMKVRNLGRKSLEEVKAKLAELGLSLRKDD.

The segment at 1–228 (MIEIEKPKIE…EHLNIFVGLT (228 aa)) is alpha N-terminal domain (alpha-NTD). The interval 245-314 (KEKVLEMTIE…ELGLSLRKDD (70 aa)) is alpha C-terminal domain (alpha-CTD).

This sequence belongs to the RNA polymerase alpha chain family. Homodimer. The RNAP catalytic core consists of 2 alpha, 1 beta, 1 beta' and 1 omega subunit. When a sigma factor is associated with the core the holoenzyme is formed, which can initiate transcription.

It catalyses the reaction RNA(n) + a ribonucleoside 5'-triphosphate = RNA(n+1) + diphosphate. In terms of biological role, DNA-dependent RNA polymerase catalyzes the transcription of DNA into RNA using the four ribonucleoside triphosphates as substrates. The sequence is that of DNA-directed RNA polymerase subunit alpha from Geobacillus kaustophilus (strain HTA426).